A 132-amino-acid polypeptide reads, in one-letter code: Ribosome-binding factor A (132 aa).

This sequence belongs to the RbfA family. As to quaternary structure, monomer. Binds 30S ribosomal subunits, but not 50S ribosomal subunits or 70S ribosomes.

It localises to the cytoplasm. Its function is as follows. One of several proteins that assist in the late maturation steps of the functional core of the 30S ribosomal subunit. Associates with free 30S ribosomal subunits (but not with 30S subunits that are part of 70S ribosomes or polysomes). Required for efficient processing of 16S rRNA. May interact with the 5'-terminal helix region of 16S rRNA. This Caldicellulosiruptor bescii (strain ATCC BAA-1888 / DSM 6725 / KCTC 15123 / Z-1320) (Anaerocellum thermophilum) protein is Ribosome-binding factor A.